The sequence spans 549 residues: Glucose-6-phosphate isomerase (549 aa).

Glu-355 acts as the Proton donor in catalysis. Residues His-386 and Lys-514 contribute to the active site.

This sequence belongs to the GPI family.

It localises to the cytoplasm. It catalyses the reaction alpha-D-glucose 6-phosphate = beta-D-fructose 6-phosphate. It functions in the pathway carbohydrate biosynthesis; gluconeogenesis. It participates in carbohydrate degradation; glycolysis; D-glyceraldehyde 3-phosphate and glycerone phosphate from D-glucose: step 2/4. Functionally, catalyzes the reversible isomerization of glucose-6-phosphate to fructose-6-phosphate. This Salmonella agona (strain SL483) protein is Glucose-6-phosphate isomerase.